A 374-amino-acid chain; its full sequence is Alginate lyase (374 aa).

The first 26 residues, 1 to 26 (MRNPKLKNLLAPTLLSLAMFAGATQA), serve as a signal peptide directing secretion. Substrate is bound by residues 67 to 68 (SK), 140 to 141 (HT), and Tyr258.

This sequence belongs to the polysaccharide lyase 5 family.

It is found in the periplasm. The catalysed reaction is Eliminative cleavage of alginate to give oligosaccharides with 4-deoxy-alpha-L-erythro-hex-4-enuronosyl groups at their non-reducing ends and beta-D-mannuronate at their reducing end.. In terms of biological role, catalyzes the depolymerization of alginate by cleaving the beta-1,4 glycosidic bond between two adjacent sugar residues via a beta-elimination mechanism. May serve to degrade mislocalized alginate that is trapped in the periplasmic space. This is Alginate lyase from Cobetia marina (Deleya marina).